The primary structure comprises 253 residues: Dihydroanticapsin 7-dehydrogenase (253 aa).

Residue 9–31 (LITGGASGIGYAAVQAFLNQQAN) participates in NAD(+) binding. Residue S139 coordinates substrate. Y152 (proton acceptor) is an active-site residue.

The protein belongs to the short-chain dehydrogenases/reductases (SDR) family.

The catalysed reaction is L-dihydroanticapsin + NAD(+) = L-anticapsin + NADH + H(+). Its pathway is antibiotic biosynthesis; bacilysin biosynthesis. Part of the bacABCDEFG operon responsible for the biosynthesis of bacilysin, an irreversible inactivator of the glutaminase domain of glucosamine synthetase. Catalyzes the dehydrogenation of the C7-hydroxyl group in the 4S-tetrahydrotyrosine (4S-H4Tyr) to yield anticapsin (epoxycyclohexanonyl-Ala). The polypeptide is Dihydroanticapsin 7-dehydrogenase (Bacillus subtilis).